The sequence spans 652 residues: Protein phosphatase Slingshot homolog 3 (652 aa).

The span at 1-16 shows a compositional bias: polar residues; the sequence is MALVTVSRSPPASGHS. The tract at residues 1-31 is disordered; that stretch reads MALVTVSRSPPASGHSTPVGPTDRVIRRRGR. Position 2 is an N-acetylalanine (Ala-2). A phosphoserine mark is found at Ser-9, Ser-37, Ser-85, and Ser-87. Positions 43 to 91 are disordered; sequence GAVLGLQDGGEGNDAAEADPEPMEKPSGEEQPAEDQTDNGQGSQSPWKQ. Over residues 80–90 the composition is skewed to polar residues; that stretch reads DNGQGSQSPWK. The region spanning 266–321 is the DEK-C domain; it reads EQMEQAILAELWQVLDASDLDSVTSKEIRQALELRLGCPLQQYRDFIDNQMLLLMA. The region spanning 325-466 is the Tyrosine-protein phosphatase domain; it reads RASRIFPHLY…LQTYQGILTA (142 aa). The active-site Phosphocysteine intermediate is Cys-410. 3 disordered regions span residues 484–526, 540–580, and 610–652; these read EPLA…LGLR, LLEP…KGGQ, and RAFQ…EGKA. The span at 540–552 shows a compositional bias: low complexity; it reads LLEPSSEPESTTE. The segment covering 642–652 has biased composition (basic and acidic residues); sequence SVDDSREEGKA.

The protein belongs to the protein-tyrosine phosphatase family. In terms of assembly, does not bind to, or colocalize with, filamentous actin.

It localises to the cytoplasm. It is found in the cytoskeleton. The protein localises to the nucleus. It catalyses the reaction O-phospho-L-tyrosyl-[protein] + H2O = L-tyrosyl-[protein] + phosphate. The enzyme catalyses O-phospho-L-seryl-[protein] + H2O = L-seryl-[protein] + phosphate. The catalysed reaction is O-phospho-L-threonyl-[protein] + H2O = L-threonyl-[protein] + phosphate. In terms of biological role, protein phosphatase which may play a role in the regulation of actin filament dynamics. Can dephosphorylate and activate the actin binding/depolymerizing factor cofilin, which subsequently binds to actin filaments and stimulates their disassembly. The chain is Protein phosphatase Slingshot homolog 3 (Ssh3) from Rattus norvegicus (Rat).